Consider the following 255-residue polypeptide: tRNA pseudouridine synthase B (255 aa).

Asp-52 (nucleophile) is an active-site residue. Substrate-binding residues include Tyr-80, Tyr-183, and Leu-204.

This sequence belongs to the pseudouridine synthase TruB family. Type 1 subfamily.

The enzyme catalyses uridine(55) in tRNA = pseudouridine(55) in tRNA. Functionally, responsible for synthesis of pseudouridine from uracil-55 in the psi GC loop of transfer RNAs. This chain is tRNA pseudouridine synthase B, found in Blochmanniella floridana.